The following is a 712-amino-acid chain: Polyribonucleotide nucleotidyltransferase (712 aa).

Residues Asp487 and Asp493 each coordinate Mg(2+). Residues 554 to 613 (PKIITMTINPDKIRDVIGPSGKQINKIIEETGVKIDIEQDGTVFISSINQEMNDKAKKII) form the KH domain. The S1 motif domain occupies 623-691 (GEIYEGKVKR…KQGRVNLSRK (69 aa)).

Belongs to the polyribonucleotide nucleotidyltransferase family. Mg(2+) is required as a cofactor.

The protein resides in the cytoplasm. The enzyme catalyses RNA(n+1) + phosphate = RNA(n) + a ribonucleoside 5'-diphosphate. Involved in mRNA degradation. Catalyzes the phosphorolysis of single-stranded polyribonucleotides processively in the 3'- to 5'-direction. The chain is Polyribonucleotide nucleotidyltransferase from Bacillus cereus (strain ATCC 10987 / NRS 248).